The chain runs to 243 residues: CD48 antigen (243 aa).

The N-terminal stretch at 1 to 26 (MCSRGWDSCLALELLLLPLSLLVTSI) is a signal peptide. Ig-like C2-type domains are found at residues 29–127 (HLVH…KLQV) and 132–212 (PKPV…VCLS). 5 N-linked (GlcNAc...) asparagine glycosylation sites follow: Asn-40, Asn-44, Asn-104, Asn-162, and Asn-189. Cys-154 and Cys-196 are disulfide-bonded. The GPI-anchor amidated serine moiety is linked to residue Ser-220. A propeptide spans 221-243 (FGVEWIASWLVVTVPTILGLLLT) (removed in mature form).

In terms of assembly, interacts with CD2. Interacts with CD244; this interaction is possible not only on different cells (trans interaction) but also on the same cell (cis interaction). Interacts with LCK. As to expression, widely expressed on all hematopoietic cells.

It is found in the cell membrane. It localises to the membrane raft. The protein localises to the secreted. In terms of biological role, glycosylphosphatidylinositol (GPI)-anchored cell surface glycoprotein that interacts via its N-terminal immunoglobulin domain with cell surface receptors including CD244/2B4 or CD2 to regulate immune cell function and activation. Participates in T-cell signaling transduction by associating with CD2 and efficiently bringing the Src family protein kinase LCK and LAT to the TCR/CD3 complex. In turn, promotes LCK phosphorylation and subsequent activation. Induces the phosphorylation of the cytoplasmic immunoreceptortyrosine switch motifs (ITSMs) of CD244 initiating a series of signaling events that leads to the generation of the immunological synapse and the directed release of cytolytic granules containing perforin and granzymes by T-lymphocytes and NK-cells. In Homo sapiens (Human), this protein is CD48 antigen (CD48).